A 456-amino-acid polypeptide reads, in one-letter code: Probable glycine dehydrogenase (decarboxylating) subunit 1 (456 aa).

This sequence belongs to the GcvP family. N-terminal subunit subfamily. In terms of assembly, the glycine cleavage system is composed of four proteins: P, T, L and H. In this organism, the P 'protein' is a heterodimer of two subunits.

The enzyme catalyses N(6)-[(R)-lipoyl]-L-lysyl-[glycine-cleavage complex H protein] + glycine + H(+) = N(6)-[(R)-S(8)-aminomethyldihydrolipoyl]-L-lysyl-[glycine-cleavage complex H protein] + CO2. Its function is as follows. The glycine cleavage system catalyzes the degradation of glycine. The P protein binds the alpha-amino group of glycine through its pyridoxal phosphate cofactor; CO(2) is released and the remaining methylamine moiety is then transferred to the lipoamide cofactor of the H protein. This Legionella pneumophila subsp. pneumophila (strain Philadelphia 1 / ATCC 33152 / DSM 7513) protein is Probable glycine dehydrogenase (decarboxylating) subunit 1.